Reading from the N-terminus, the 142-residue chain is Multiprotein-bridging factor 1b (142 aa).

A disordered region spans residues 49 to 75; sequence NAGSNKAASSGTSLNTKKLDDDTENLS. Polar residues predominate over residues 50-64; it reads AGSNKAASSGTSLNT. A compositionally biased stretch (basic and acidic residues) spans 65-75; sequence KKLDDDTENLS. Residues 87–141 enclose the HTH cro/C1-type domain; the sequence is IMQARGEKKLTQSQLAHLINEKPQVIQEYESGKAIPNQQILSKLERALGAKLRGK. A DNA-binding region (H-T-H motif) is located at residues 98–117; the sequence is QSQLAHLINEKPQVIQEYES.

This sequence belongs to the MBF1 family. In terms of tissue distribution, expressed in leaves, roots, stems, petioles and shoots. Higher expression in flowers and siliques. Detected in leaf veins through development.

It is found in the nucleus. Its subcellular location is the nucleolus. Transcriptional coactivator that stimulates transcriptional activity by bridging regulatory proteins and TBP, thereby recruiting TBP to promoters occupied by DNA-binding regulators. The protein is Multiprotein-bridging factor 1b (MBF1B) of Arabidopsis thaliana (Mouse-ear cress).